The following is a 452-amino-acid chain: Bifunctional protein GlmU (452 aa).

Residues 1–224 (MNIVILAAGM…EWETHGVNSK (224 aa)) are pyrophosphorylase. Residues 6-9 (LAAG), Lys-20, Gln-71, 76-77 (GT), 98-100 (YGD), Gly-135, Glu-149, Asn-164, and Asn-222 each bind UDP-N-acetyl-alpha-D-glucosamine. A Mg(2+)-binding site is contributed by Asp-100. Position 222 (Asn-222) interacts with Mg(2+). Positions 225–245 (VQLAELERIHQRNIAHALLEQ) are linker. The N-acetyltransferase stretch occupies residues 246 to 452 (GVTLADPARI…NWQRPVKIKK (207 aa)). Residues Arg-328 and Lys-346 each contribute to the UDP-N-acetyl-alpha-D-glucosamine site. His-358 acts as the Proton acceptor in catalysis. Positions 361 and 372 each coordinate UDP-N-acetyl-alpha-D-glucosamine. Residues Ala-375, 381 to 382 (NY), Ser-400, Ala-418, and Arg-435 contribute to the acetyl-CoA site.

In the N-terminal section; belongs to the N-acetylglucosamine-1-phosphate uridyltransferase family. This sequence in the C-terminal section; belongs to the transferase hexapeptide repeat family. Homotrimer. Mg(2+) is required as a cofactor.

The protein resides in the cytoplasm. It carries out the reaction alpha-D-glucosamine 1-phosphate + acetyl-CoA = N-acetyl-alpha-D-glucosamine 1-phosphate + CoA + H(+). The catalysed reaction is N-acetyl-alpha-D-glucosamine 1-phosphate + UTP + H(+) = UDP-N-acetyl-alpha-D-glucosamine + diphosphate. It functions in the pathway nucleotide-sugar biosynthesis; UDP-N-acetyl-alpha-D-glucosamine biosynthesis; N-acetyl-alpha-D-glucosamine 1-phosphate from alpha-D-glucosamine 6-phosphate (route II): step 2/2. Its pathway is nucleotide-sugar biosynthesis; UDP-N-acetyl-alpha-D-glucosamine biosynthesis; UDP-N-acetyl-alpha-D-glucosamine from N-acetyl-alpha-D-glucosamine 1-phosphate: step 1/1. The protein operates within bacterial outer membrane biogenesis; LPS lipid A biosynthesis. Its function is as follows. Catalyzes the last two sequential reactions in the de novo biosynthetic pathway for UDP-N-acetylglucosamine (UDP-GlcNAc). The C-terminal domain catalyzes the transfer of acetyl group from acetyl coenzyme A to glucosamine-1-phosphate (GlcN-1-P) to produce N-acetylglucosamine-1-phosphate (GlcNAc-1-P), which is converted into UDP-GlcNAc by the transfer of uridine 5-monophosphate (from uridine 5-triphosphate), a reaction catalyzed by the N-terminal domain. In Janthinobacterium sp. (strain Marseille) (Minibacterium massiliensis), this protein is Bifunctional protein GlmU.